The primary structure comprises 332 residues: UPF0194 membrane protein YbhG (332 aa).

The N-terminal stretch at 1–16 is a signal peptide; the sequence is MMKKPVVIGLAVVVLA. A coiled-coil region spans residues 107 to 209; sequence NEEIAQAAAA…LNLQDSTLIA (103 aa).

It belongs to the UPF0194 family.

It is found in the periplasm. This Escherichia coli (strain K12 / MC4100 / BW2952) protein is UPF0194 membrane protein YbhG.